The primary structure comprises 410 residues: Zinc transporter ttm-1 (410 aa).

Low complexity-rich tracts occupy residues 1–13 (MTISMISPSSIRL) and 35–46 (SVSSSDSGVSAD). Positions 1–94 (MTISMISPSS…GAHKHSHDEK (94 aa)) are disordered. At 1–103 (MTISMISPSS…KYQKGRRAEK (103 aa)) the chain is on the cytoplasmic side. A compositionally biased stretch (basic residues) spans 50-69 (HHHHGHGHGHSHGGHGHSHT). The chain crosses the membrane as a helical span at residues 104 to 124 (VLWAVAALSAVFIAAEFVGGF). Residues 125-129 (WAQSL) lie on the Extracellular side of the membrane. The chain crosses the membrane as a helical span at residues 130–150 (AIMTDAGHMLSDLLSFIISIF). The Cytoplasmic portion of the chain corresponds to 151–171 (AIRCARLPASKRLSFGYERAE). Residues 172-192 (VLGALTSVIILWVLTTVLVVV) form a helical membrane-spanning segment. Residues 193-208 (AIQRIVNNEHEVDADV) are Extracellular-facing. A helical membrane pass occupies residues 209–229 (MLITAGVGVLFNIVMGLVLHF). Residues 230 to 258 (GTGGHGHTHGGHSSHGHAHDGKNVNVRAA) lie on the Cytoplasmic side of the membrane. A helical transmembrane segment spans residues 259 to 279 (LIHVIGDLVQSIGVLIAALII). Residue Arg-280 is a topological domain, extracellular. A helical transmembrane segment spans residues 281-301 (FTGWTLADPICTFLFSIIVLF). Topologically, residues 302–410 (TTVTVMRDIF…CDTCQQQETA (109 aa)) are cytoplasmic.

It belongs to the cation diffusion facilitator (CDF) transporter (TC 2.A.4) family. SLC30A subfamily. As to expression, isoform a: Expressed in the hypodermis and the intestine. Isoform b: Expressed in the intestine, head neurons, seam cells, hypodermis, and the vulva.

Its subcellular location is the cytoplasmic vesicle membrane. It is found in the apical cell membrane. Functionally, promotes excretion of zinc from intestinal cells into the intestinal lumen in response to increased dietary zinc. Involved in cadmium resistance, possibly by promoting its transport from cells. Involved in resistance to B.thuringiensis pore-forming toxin Cry5B downstream of the sek-1 and pmk-1 MAPK kinase pathway. The polypeptide is Zinc transporter ttm-1 (Caenorhabditis elegans).